Consider the following 157-residue polypeptide: Large ribosomal subunit protein uL15 (157 aa).

Positions 1–41 are disordered; sequence MKLHELSDNPGATKKRKRVGRGPGSGTGKMGGRGIKGQKSR. Residues 21 to 35 are compositionally biased toward gly residues; it reads RGPGSGTGKMGGRGI.

Belongs to the universal ribosomal protein uL15 family. As to quaternary structure, part of the 50S ribosomal subunit.

In terms of biological role, binds to the 23S rRNA. This Jannaschia sp. (strain CCS1) protein is Large ribosomal subunit protein uL15.